Consider the following 206-residue polypeptide: Protein 6b (206 aa).

A disordered region spans residues Tyr-162–Leu-182. Over residues Gln-165–Leu-182 the composition is skewed to acidic residues.

Involved in tumor formation and increases auxin and cytokinin effects in host plants. This Allorhizobium ampelinum (strain ATCC BAA-846 / DSM 112012 / S4) (Agrobacterium vitis (strain S4)) protein is Protein 6b (6b).